The following is a 108-amino-acid chain: Complement inhibitor CirpT4 (108 aa).

The first 19 residues, 1–19, serve as a signal peptide directing secretion; that stretch reads MRAFVALFCTLVAFATVIC. 4 disulfides stabilise this stretch: C40-C64, C59-C98, C76-C99, and C85-C104.

This sequence belongs to the CirpT family. In terms of tissue distribution, expressed in salivary glands.

The protein resides in the secreted. Complement inhibitor. Prevents complement-mediated activation of C5 by sterically preventing direct binding of C5 to its convertase (binding with domains MG4 and MG5). Binds C5 at a different binding site than the other tick complement inhibitors OmCI and RaCI3, and the drug eculizumab. Inhibits the complement in human, rat and guinea pig, and also shows a reduced inhibition in rabbit and pig. This Amblyomma americanum (Lone star tick) protein is Complement inhibitor CirpT4.